A 188-amino-acid polypeptide reads, in one-letter code: Elongation factor P (188 aa).

The protein belongs to the elongation factor P family.

The protein resides in the cytoplasm. Its pathway is protein biosynthesis; polypeptide chain elongation. Its function is as follows. Involved in peptide bond synthesis. Stimulates efficient translation and peptide-bond synthesis on native or reconstituted 70S ribosomes in vitro. Probably functions indirectly by altering the affinity of the ribosome for aminoacyl-tRNA, thus increasing their reactivity as acceptors for peptidyl transferase. The chain is Elongation factor P from Nitrobacter winogradskyi (strain ATCC 25391 / DSM 10237 / CIP 104748 / NCIMB 11846 / Nb-255).